Reading from the N-terminus, the 386-residue chain is Patatin (386 aa).

Residues 1–23 (MATTKSFLILFFMILATTSSTCA) form the signal peptide. A PNPLA domain is found at 32–229 (LSIDGGGIKG…TVGDPALLSL (198 aa)). A GXGXXG motif is present at residues 36-41 (GGGIKG). A GXSXG motif is present at residues 75-79 (GTSTG). The Nucleophile role is filled by serine 77. The N-linked (GlcNAc...) asparagine glycan is linked to asparagine 115. The active-site Proton acceptor is aspartate 215. Residues 215–217 (DGA) carry the DGA/G motif.

Belongs to the patatin family.

It localises to the vacuole. Its function is as follows. Probable lipolytic acyl hydrolase (LAH), an activity which is thought to be involved in the response of tubers to pathogens. In Solanum tuberosum (Potato), this protein is Patatin.